The primary structure comprises 174 residues: Inactive signal peptidase IA (174 aa).

Over 1-7 (MKKVVKY) the chain is Cytoplasmic. A helical transmembrane segment spans residues 8-28 (LISLILAIIIVLFVQTFVIVG). Residues 29 to 174 (HVIPNNDMSP…FSKWTVQFKS (146 aa)) are Extracellular-facing.

This sequence belongs to the peptidase S26 family.

It localises to the cell membrane. Functionally, catalytically inactive. This Staphylococcus aureus (strain COL) protein is Inactive signal peptidase IA (spsA).